The primary structure comprises 333 residues: MATIKDVAKLASVSTTTVSHVINKTRFVAEATQKRVWEAVEELNYAPSAVARSLKCNTTRTIGMLVTQSFNPFFAEMMHGVENYCYKQGYTLFMCNTEGDLDKQKHYLRMLAEKRVDGLLVMCSDLNEQLLAQLEKNTELPMVIMDWGPDSPHTDKIIDNSEEGGYLATKHLIENGHTKIGCVTGQLDKATCKERIHGFYRALSEANLTSNPDWIFEGDFECSSASKSVEKMLQMEDKPTALFCFNDIMALAAISKIQQTGLRVPEDISIIGYDNIELSAYFSPPLTTIHQPKRRVGKTAVEILLERIKDKHHERRIFEMHPEVVTRKSVHKL.

Residues 2-56 (ATIKDVAKLASVSTTTVSHVINKTRFVAEATQKRVWEAVEELNYAPSAVARSLKC) form the HTH lacI-type domain. A DNA-binding region (H-T-H motif) is located at residues 4 to 23 (IKDVAKLASVSTTTVSHVIN). The DNA-binding element occupies 48–56 (SAVARSLKC). Hypoxanthine is bound by residues phenylalanine 73, lysine 189, threonine 191, phenylalanine 220, and aspartate 274.

Homodimer.

The protein operates within purine metabolism; purine nucleotide biosynthesis [regulation]. In terms of biological role, is the main repressor of the genes involved in the de novo synthesis of purine nucleotides, regulating purB, purC, purEK, purF, purHD, purL, purMN and guaBA expression. PurR is allosterically activated to bind its cognate DNA by binding the purine corepressors, hypoxanthine or guanine, thereby effecting transcription repression. In Aliivibrio salmonicida (strain LFI1238) (Vibrio salmonicida (strain LFI1238)), this protein is HTH-type transcriptional repressor PurR.